Consider the following 410-residue polypeptide: Acetyltransferase aurG (410 aa).

The next 3 helical transmembrane spans lie at 3–23 (LWLV…VVCF), 28–48 (SLVR…GLIL), and 59–79 (WSLV…VGLI). Polar residues predominate over residues 90-99 (TSSRGGQPNA). The tract at residues 90-112 (TSSRGGQPNASLDLAGRKKPPSS) is disordered. Residue Asn-98 is glycosylated (N-linked (GlcNAc...) asparagine). The next 4 membrane-spanning stretches (helical) occupy residues 157-177 (AMTL…GGDL), 219-239 (MYFS…MVGL), 300-320 (ILAT…YSYG), and 364-384 (IGYV…FFPL).

Belongs to the wax synthase family.

It localises to the membrane. Its pathway is polyketide biosynthesis. Its function is as follows. Acetyltransferase; part of the gene cluster that mediates the biosynthesis of aurovertins, fungal polyketides that exhibit potent inhibition of adenosine triphosphate synthase. Tha biosynthesis starts with the HR-PKS aurA that selects propionate as the starter unit; synthesizes a hexa-ene chain through the repeated functions of the KR and DH domains in the first six iterations; selectively introduces three alpha-methyl substitutions at C4, C6, and C16 using the S-adensylmethionine-dependent cMET; and shuts off KR and DH in the last three iterations to afford a 1,3,5-triketo portion that can undergo intramolecular cyclization to yield the alpha-pyrone intermediate. AurE may act as a cyclase and enhances the rate of pyrone formation and product release of aurA. The methyltransferase aurB then methylates the C17 hydroxyl group. C17 methylation is required to initiate epoxidation by the downstream monooxygenase aurC. The monooxygenase aurC and the epoxide hydrolase aurD can iteratively transform the terminal triene portion of the methylated precursor into the dioxabicyclo[3.2.1]octane scaffold of aurovertin E. Epoxidation modifications of the precursor occur in two separate steps; bis-epoxidation of the two terminal olefins takes place first, followed by another epoxidation that occurs at C7-C8 after tetrahydrofuran formation. The O-acyltransferase aurG converts aurovertin E to aurovertin A. This is Acetyltransferase aurG from Calcarisporium arbuscula (Dendryphion arbuscula).